The chain runs to 224 residues: UPF0758 protein Tola_0183 (224 aa).

The region spanning 102–224 is the MPN domain; sequence SLTSPQLVRR…PVSFAERGWL (123 aa). Residues His173, His175, and Asp186 each contribute to the Zn(2+) site. The JAMM motif signature appears at 173 to 186; sequence HNHPSGVAEPSHAD.

Belongs to the UPF0758 family.

The chain is UPF0758 protein Tola_0183 from Tolumonas auensis (strain DSM 9187 / NBRC 110442 / TA 4).